We begin with the raw amino-acid sequence, 859 residues long: DNA mismatch repair protein MutS (859 aa).

618–625 is an ATP binding site; sequence GPNMGGKS.

This sequence belongs to the DNA mismatch repair MutS family.

In terms of biological role, this protein is involved in the repair of mismatches in DNA. It is possible that it carries out the mismatch recognition step. This protein has a weak ATPase activity. The sequence is that of DNA mismatch repair protein MutS from Shewanella halifaxensis (strain HAW-EB4).